Consider the following 73-residue polypeptide: Copper chaperone ATX1 (73 aa).

One can recognise an HMA domain in the interval 4-68 (IKHYQFNVVM…KIKKTGKEVR (65 aa)). 2 residues coordinate Cu(+): cysteine 15 and cysteine 18.

This sequence belongs to the ATX1 family. As to quaternary structure, homodimer. Interacts with CCC2 via the copper anion.

The protein resides in the cytoplasm. Tetrathiomolybdate directly and reversibly down-regulates copper delivery to secreted metalloenzymes. Its function is as follows. Copper homeostasis factor that specifically transports copper to the secretory pathway for incorporation into copper enzymes destined for the cell surface or extracellular milieu. Shuttles copper to the transport ATPase CCC2 on a post-Golgi vesicle for eventual targeting to the cell-surface high-affinity iron uptake protein FET3. Protects against oxygen toxicity. In Saccharomyces cerevisiae (strain ATCC 204508 / S288c) (Baker's yeast), this protein is Copper chaperone ATX1.